The primary structure comprises 447 residues: Alliin lyase (447 aa).

The propeptide occupies 1 to 2 (QA). One can recognise an EGF-like; atypical domain in the interval 15–61 (EAVANINCSGHGRAFLDGILSDGSPKCECNTCYTGADCSQKITGCSA). The N-linked (GlcNAc...) asparagine glycan is linked to Asn21. Disulfide bonds link Cys22–Cys41, Cys43–Cys52, and Cys46–Cys59. 94 to 102 (YFFNPVSNF) is a binding site for chloride. Asn148 and Asn193 each carry an N-linked (GlcNAc...) asparagine glycan. At Lys253 the chain carries N6-(pyridoxal phosphate)lysine. N-linked (GlcNAc...) asparagine glycosylation is present at Asn330. Residues Cys370 and Cys378 are joined by a disulfide bond.

The protein belongs to the alliinase family. In terms of assembly, homodimer. Requires pyridoxal 5'-phosphate as cofactor.

Its subcellular location is the vacuole. It catalyses the reaction an S-alkyl-L-cysteine S-oxide = an S-alkyl sulfenate + 2-aminoprop-2-enoate. The sequence is that of Alliin lyase from Allium cepa var. aggregatum (Shallot).